Reading from the N-terminus, the 119-residue chain is Outer membrane protein assembly factor BamE (119 aa).

The first 19 residues, 1–19, serve as a signal peptide directing secretion; the sequence is MQFTKWFIALPLAVTALSG. Cys-20 carries the N-palmitoyl cysteine lipid modification. Residue Cys-20 is the site of S-diacylglycerol cysteine attachment.

This sequence belongs to the BamE family. As to quaternary structure, part of the Bam complex.

It is found in the cell outer membrane. In terms of biological role, part of the outer membrane protein assembly complex, which is involved in assembly and insertion of beta-barrel proteins into the outer membrane. The sequence is that of Outer membrane protein assembly factor BamE from Vibrio cholerae serotype O1 (strain ATCC 39541 / Classical Ogawa 395 / O395).